A 69-amino-acid chain; its full sequence is MKLSAFTLAFALILMMAIMYNMAEAAALADADADAEAIAGLKDWWNKHKDKIVKVVKEMGKAGINAAGK.

The signal sequence occupies residues 1–25 (MKLSAFTLAFALILMMAIMYNMAEA). Positions 26–39 (AALADADADAEAIA) are excised as a propeptide.

As to expression, expressed by the venom gland.

The protein localises to the secreted. Its function is as follows. May have antimicrobial properties, like most ant linear peptides. In addition, when tested in vitro on the parasite Trypanosoma cruzi (responsible of the Chagas disease), is able to moderately reduce the number of the three forms (epimastigote, trypomastigote and amastigote) by inducing cell death through necrosis. The sequence is that of M-poneratoxin-Dq4e from Dinoponera quadriceps (South American ant).